The primary structure comprises 379 residues: 3-dehydroquinate synthase (379 aa).

NAD(+)-binding positions include proline 67 to lysine 72, glycine 101 to aspartate 105, threonine 125 to threonine 126, lysine 138, and lysine 147. Positions 180, 242, and 258 each coordinate Zn(2+).

This sequence belongs to the sugar phosphate cyclases superfamily. Dehydroquinate synthase family. NAD(+) serves as cofactor. It depends on Co(2+) as a cofactor. The cofactor is Zn(2+).

The protein localises to the cytoplasm. The catalysed reaction is 7-phospho-2-dehydro-3-deoxy-D-arabino-heptonate = 3-dehydroquinate + phosphate. It participates in metabolic intermediate biosynthesis; chorismate biosynthesis; chorismate from D-erythrose 4-phosphate and phosphoenolpyruvate: step 2/7. Catalyzes the conversion of 3-deoxy-D-arabino-heptulosonate 7-phosphate (DAHP) to dehydroquinate (DHQ). In Chlamydia caviae (strain ATCC VR-813 / DSM 19441 / 03DC25 / GPIC) (Chlamydophila caviae), this protein is 3-dehydroquinate synthase.